Reading from the N-terminus, the 516-residue chain is uncharacterized protein (516 aa).

The N-terminal stretch at 1–17 (MSVWVALALLGMCVSCT) is a signal peptide. Disordered stretches follow at residues 29–197 (KEPP…EVPR) and 296–426 (RTVS…RDHL). The segment covering 71-85 (RVPESSQEREQKPES) has biased composition (basic and acidic residues). Residues 122 to 144 (VAPPAPPAPTAPRPHRPSPPPVS) show a composition bias toward pro residues. The segment covering 145–155 (PSASKPKQRAV) has biased composition (low complexity). A compositionally biased stretch (basic and acidic residues) spans 351–367 (KAQHGTPRPDEKKDREP). A compositionally biased stretch (low complexity) spans 394-406 (SPASQPSAPSAAP). The span at 415–426 (AHKEGQEKRDHL) shows a compositional bias: basic and acidic residues.

This is an uncharacterized protein from Treponema pallidum (strain Nichols).